The primary structure comprises 144 residues: Large ribosomal subunit protein uL13 (144 aa).

It belongs to the universal ribosomal protein uL13 family. As to quaternary structure, part of the 50S ribosomal subunit.

Its function is as follows. This protein is one of the early assembly proteins of the 50S ribosomal subunit, although it is not seen to bind rRNA by itself. It is important during the early stages of 50S assembly. This chain is Large ribosomal subunit protein uL13, found in Oleidesulfovibrio alaskensis (strain ATCC BAA-1058 / DSM 17464 / G20) (Desulfovibrio alaskensis).